A 2194-amino-acid chain; its full sequence is Supervillin (2194 aa).

An interaction with MYLK region spans residues 1 to 174 (MKRKERIARR…SSYSRTELSG (174 aa)). Disordered stretches follow at residues 35–98 (LEED…TQSL), 118–335 (EKYG…QRRH), 388–414 (PESI…KVLE), 450–500 (EDRG…TERM), 513–563 (AVSQ…QTSK), 589–667 (RASR…KVDE), 685–719 (KSFD…QPVT), and 739–791 (HPVM…DSST). Residue Ser50 is modified to Phosphoserine. Residues 87–98 (PYSSGIMDTQSL) are compositionally biased toward polar residues. 2 stretches are compositionally biased toward basic and acidic residues: residues 139–161 (SRKD…ESSR) and 181–192 (ESKDYGLHRSDG). Phosphoserine is present on residues Ser245 and Ser262. Basic and acidic residues-rich tracts occupy residues 283–294 (PKHEWFLQKDSE) and 308–319 (KVREKLVREESA). Residues 320 to 330 (RSSPELTSESL) show a composition bias toward polar residues. Residues Ser321 and Ser322 each carry the phosphoserine modification. The segment covering 455–467 (GRSQEAPSGTEDL) has biased composition (polar residues). Residues 540 to 551 (PPQLQALKAKAP) show a composition bias toward low complexity. Composition is skewed to basic and acidic residues over residues 592-615 (RKPE…ERGS) and 626-635 (ENRKTSERFR). Phosphoserine occurs at positions 652 and 686. Positions 704-714 (QRLRRLQDRSH) are enriched in basic and acidic residues. Ser747 and Ser781 each carry phosphoserine. Residues 770–782 (LARDQTNESKDSA) are compositionally biased toward basic and acidic residues. At Tyr829 the chain carries Phosphotyrosine. Position 831 is a phosphothreonine (Thr831). Phosphoserine is present on residues Ser893, Ser899, Ser903, Ser947, Ser979, and Ser1031. The interval 1036-1077 (EFGEPTSEQTGAAAGKPAAPTATPVSWKPQDPSEQPQEKRYQ) is disordered. Residues 1045-1059 (TGAAAGKPAAPTATP) are compositionally biased toward low complexity. 2 positions are modified to phosphoserine: Ser1099 and Ser1205. Position 1210 is a phosphothreonine (Thr1210). Phosphoserine occurs at positions 1214, 1302, and 1385. The segment at 1399–1667 (SNVSLRSVNL…KFLDWTELKR (269 aa)) is interaction with NEB. Gelsolin-like repeat units follow at residues 1421 to 1520 (KKLM…LGGQ), 1540 to 1662 (IETN…FLDW), 1732 to 1842 (ISVD…FQGG), 1861 to 1962 (WRLY…LGRR), and 1995 to 2102 (ATEF…FPSW). One can recognise an HP domain in the interval 2131-2194 (KLCKTIYPLA…VNLKKAKGLF (64 aa)).

The protein belongs to the villin/gelsolin family. As to quaternary structure, associates with F-actin. Interacts with NEB. Interacts with MYH9. Interacts with MYLK. Interacts with TASOR. In terms of assembly, interacts with TRIP6 and DYNLT1. Interacts with KIF14; at midbody during cytokinesis.

Its subcellular location is the cell membrane. The protein localises to the cytoplasm. It is found in the cytoskeleton. It localises to the cell projection. The protein resides in the invadopodium. Its subcellular location is the podosome. The protein localises to the midbody. It is found in the cleavage furrow. In terms of biological role, forms a high-affinity link between the actin cytoskeleton and the membrane. Is among the first costameric proteins to assemble during myogenesis and it contributes to myogenic membrane structure and differentiation. Appears to be involved in myosin II assembly. May modulate myosin II regulation through MLCK during cell spreading, an initial step in cell migration. May play a role in invadopodial function. Functionally, may be involved in modulation of focal adhesions. Supervillin-mediated down-regulation of focal adhesions involves binding to TRIP6. Plays a role in cytokinesis through KIF14 interaction. The sequence is that of Supervillin from Bos taurus (Bovine).